We begin with the raw amino-acid sequence, 285 residues long: 2-dehydro-3-deoxyphosphooctonate aldolase (285 aa).

It belongs to the KdsA family.

It localises to the cytoplasm. It carries out the reaction D-arabinose 5-phosphate + phosphoenolpyruvate + H2O = 3-deoxy-alpha-D-manno-2-octulosonate-8-phosphate + phosphate. Its pathway is carbohydrate biosynthesis; 3-deoxy-D-manno-octulosonate biosynthesis; 3-deoxy-D-manno-octulosonate from D-ribulose 5-phosphate: step 2/3. It functions in the pathway bacterial outer membrane biogenesis; lipopolysaccharide biosynthesis. This chain is 2-dehydro-3-deoxyphosphooctonate aldolase, found in Paracidovorax citrulli (strain AAC00-1) (Acidovorax citrulli).